Consider the following 170-residue polypeptide: uncharacterized protein (170 aa).

This is an uncharacterized protein from Aquifex aeolicus (strain VF5).